The following is a 215-amino-acid chain: Protein GET1 (215 aa).

The Lumenal segment spans residues 1–4 (MINL). The helical transmembrane segment at 5–24 (ALVIFLCTLLNQIVSWVGKS) threads the bilayer. Over 25–108 (VLQEIAFTAY…SFSKKFSTLL (84 aa)) the chain is Cytoplasmic. Positions 73–94 (AKLRRKLDKGLADLEKTNNTLS) form a coiled coil. Residues 109-129 (WLMTTGAQFLLSWWFRKQPIF) form a helical membrane-spanning segment. The Lumenal portion of the chain corresponds to 130-153 (WLPEGWVPYPVAWLLSFPSAPIGS). Residues 154 to 170 (VSSGAWGAICRRVLSTL) traverse the membrane as a helical segment. Over 171 to 215 (QEIIQSLLAPSPAATGPVPTGPSSAKNDQPEAKIEALALEHEKLD) the chain is Cytoplasmic. A disordered region spans residues 182–202 (PAATGPVPTGPSSAKNDQPEA).

It belongs to the WRB/GET1 family. In terms of assembly, interacts with GET3.

Its subcellular location is the endoplasmic reticulum membrane. Its function is as follows. Required for the post-translational delivery of tail-anchored (TA) proteins to the endoplasmic reticulum. Acts as a membrane receptor for soluble GET3, which recognizes and selectively binds the transmembrane domain of TA proteins in the cytosol. This is Protein GET1 from Cryptococcus neoformans var. neoformans serotype D (strain JEC21 / ATCC MYA-565) (Filobasidiella neoformans).